The sequence spans 444 residues: Glutamate--methylamine ligase (444 aa).

In terms of domain architecture, GS beta-grasp spans 14–97; the sequence is HHVKYVLAQF…LVCDGHVNGK (84 aa). The region spanning 103–444 is the GS catalytic domain; that stretch reads TRVVLKQQIA…WEINRYVQFY (342 aa).

This sequence belongs to the glutamine synthetase family. Type 3 subfamily. Mg(2+) serves as cofactor.

The catalysed reaction is methylamine + L-glutamate + ATP = N(5)-methyl-L-glutamine + ADP + phosphate + H(+). It catalyses the reaction ethylamine + L-glutamate + ATP = N(5)-ethyl-L-glutamine + ADP + phosphate + H(+). Its activity is regulated as follows. Formation of theanine is repressed by a high concentration of glutamic acid. Its function is as follows. Catalyzes the formation of N(5)-methyl-L-glutamine from glutamate and methylamine. In vitro, can also use ethylamine, hydroxylamine and ammonia, with 75%, 40% and 1% activity compared to methylamine, respectively. This Methylovorus mays protein is Glutamate--methylamine ligase.